The chain runs to 589 residues: Putative adenine deaminase BC_3012 (589 aa).

The protein belongs to the metallo-dependent hydrolases superfamily. Adenine deaminase family.

The enzyme catalyses adenine + H2O + H(+) = hypoxanthine + NH4(+). The polypeptide is Putative adenine deaminase BC_3012 (Bacillus cereus (strain ATCC 14579 / DSM 31 / CCUG 7414 / JCM 2152 / NBRC 15305 / NCIMB 9373 / NCTC 2599 / NRRL B-3711)).